The sequence spans 281 residues: Putative phosphatase MPN_264 (281 aa).

Residue Asp8 is the Nucleophile of the active site. Asp8 is a Mg(2+) binding site. Residue Leu9 coordinates phosphate. Asp10 contributes to the Mg(2+) binding site. Residues 44–45 (TG) and Lys205 each bind phosphate. Mg(2+) contacts are provided by Asp228 and Ser229. Asn231 provides a ligand contact to phosphate.

The protein belongs to the HAD-like hydrolase superfamily. Cof family. The cofactor is Mg(2+).

This chain is Putative phosphatase MPN_264, found in Mycoplasma pneumoniae (strain ATCC 29342 / M129 / Subtype 1) (Mycoplasmoides pneumoniae).